The chain runs to 568 residues: NADPH oxidase 3 (568 aa).

Topologically, residues 1 to 12 (MPTCWILNESVS) are cytoplasmic. The chain crosses the membrane as a helical span at residues 13-33 (FVVALLWLAINIYLFIDTFCW). Residues 34 to 49 (YAEEESFFYTRVILGS) lie on the Extracellular side of the membrane. The chain crosses the membrane as a helical span at residues 50-70 (ALAWARASAVCLNFNCMLILL). One can recognise a Ferric oxidoreductase domain in the interval 55–284 (RASAVCLNFN…VVLYACEIII (230 aa)). Topologically, residues 71–103 (PVSRNFVSLVRGTSVCCRGPWRRQLDKNLKFHK) are cytoplasmic. A helical transmembrane segment spans residues 104–124 (LVAYGIAVNSVIHIVAHLFNL). Residues 125–167 (ERYHLGQAKDAEGLLAALSKLGNAPNESYLNPVRTLYTGTTTQ) are Extracellular-facing. The chain crosses the membrane as a helical span at residues 168–188 (LLMTVSGITGLVISLALILIM). The Cytoplasmic segment spans residues 189-201 (TSSTEFIRQSSYE). The chain crosses the membrane as a helical span at residues 202-222 (LFWYTHHIFIFLFISLAIHGG). Topologically, residues 223-395 (GRIIRGQTPE…DGPFGGSLAD (173 aa)) are extracellular. The N-linked (GlcNAc...) asparagine glycan is linked to Asn238. The FAD-binding FR-type domain maps to 285–395 (RFWRSHQEVV…DGPFGGSLAD (111 aa)). Residues 396-416 (VFHYPVSVCIATGIGVTPFAS) traverse the membrane as a helical segment. Over 417–568 (LLKSVWYKCC…VHFYYNKENF (152 aa)) the chain is Cytoplasmic.

In terms of assembly, forms a heterodimer with CYBA/p22phox which is essential for its activity and cell membrane localization. Heme is required as a cofactor. In terms of processing, N-glycosylated in a CYBA/p22phox-dependent manner. In terms of tissue distribution, expressed in the inner ear by the spiral glanglia and the organ of Corti.

It localises to the cell membrane. It carries out the reaction NADPH + 2 O2 = 2 superoxide + NADP(+) + H(+). Its activity is regulated as follows. Activated by the ototoxic drug cisplatin. Activated by NOXO1. Cooperatively activated by NCF1 and NCF2 or NOXA1 in a phorbol 12-myristate 13-acetate (PMA)-dependent manner. Inhibited by diphenyleneiodonium chloride. Its function is as follows. NADPH oxidase that catalyzes the generation of superoxide from molecular oxygen utilizing NADPH as an electron donor, upon formation of a complex with CYBA/p22phox. Plays a role in the biogenesis of otoconia/otolith, which are crystalline structures of the inner ear involved in the perception of gravity. The protein is NADPH oxidase 3 (Nox3) of Rattus norvegicus (Rat).